Here is a 202-residue protein sequence, read N- to C-terminus: 3-isopropylmalate dehydratase small subunit 1 (202 aa).

The protein belongs to the LeuD family. LeuD type 1 subfamily. As to quaternary structure, heterodimer of LeuC and LeuD.

The catalysed reaction is (2R,3S)-3-isopropylmalate = (2S)-2-isopropylmalate. Its pathway is amino-acid biosynthesis; L-leucine biosynthesis; L-leucine from 3-methyl-2-oxobutanoate: step 2/4. Functionally, catalyzes the isomerization between 2-isopropylmalate and 3-isopropylmalate, via the formation of 2-isopropylmaleate. This chain is 3-isopropylmalate dehydratase small subunit 1, found in Bordetella pertussis (strain Tohama I / ATCC BAA-589 / NCTC 13251).